The following is a 959-amino-acid chain: Translation initiation factor IF-2 (959 aa).

The disordered stretch occupies residues 33-373 (SHASSVEEAD…PVTERKFHEL (341 aa)). The segment covering 46–60 (IASSFSAGVTKNVQA) has biased composition (polar residues). Residues 63-73 (AKDKQVAEQKA) are compositionally biased toward basic and acidic residues. Residues 76 to 100 (AKATTPQPAASKAAEKPAAATQEAS) show a composition bias toward low complexity. Basic and acidic residues-rich tracts occupy residues 112 to 125 (FKAEREARAKEQVA), 134 to 143 (SNDRKSDYRQ), and 179 to 192 (NDGHRQAGNRDKNR). Polar residues predominate over residues 193–211 (SFNANSRQQDIGRQGQTQA). Composition is skewed to basic and acidic residues over residues 234–258 (ARQRESRFREQEEAKRLEQQARQEA) and 266–276 (QTEDKKHREAP). Low complexity predominate over residues 277 to 287 (AKATEPAEPVA). The span at 306–323 (NRPDKAHDRDHGLEDGQK) shows a compositional bias: basic and acidic residues. Low complexity predominate over residues 328–346 (SWNSQNQVRNQKNSNWNNN). Residues 347–357 (KKNKKGKHHKN) show a composition bias toward basic residues. One can recognise a tr-type G domain in the interval 460–629 (ERAPVVTIMG…LLVAEVEELK (170 aa)). The segment at 469–476 (GHVDHGKT) is G1. GTP is bound at residue 469–476 (GHVDHGKT). A G2 region spans residues 494–498 (GITQH). The tract at residues 515-518 (DTPG) is G3. GTP contacts are provided by residues 515 to 519 (DTPGH) and 569 to 572 (NKID). Residues 569-572 (NKID) are G4. The interval 605–607 (SAK) is G5.

It belongs to the TRAFAC class translation factor GTPase superfamily. Classic translation factor GTPase family. IF-2 subfamily.

The protein resides in the cytoplasm. One of the essential components for the initiation of protein synthesis. Protects formylmethionyl-tRNA from spontaneous hydrolysis and promotes its binding to the 30S ribosomal subunits. Also involved in the hydrolysis of GTP during the formation of the 70S ribosomal complex. This chain is Translation initiation factor IF-2, found in Streptococcus equi subsp. zooepidemicus (strain H70).